The sequence spans 297 residues: Light-independent protochlorophyllide reductase iron-sulfur ATP-binding protein (297 aa).

Residues 41-46 and Lys-70 contribute to the ATP site; that span reads GIGKST. Ser-45 is a binding site for Mg(2+). [4Fe-4S] cluster contacts are provided by Cys-126 and Cys-160. Residues 211–212 and 235–237 each bind ATP; these read NR and PDL.

This sequence belongs to the NifH/BchL/ChlL family. As to quaternary structure, homodimer. Protochlorophyllide reductase is composed of three subunits; BchL, BchN and BchB. [4Fe-4S] cluster is required as a cofactor.

The catalysed reaction is chlorophyllide a + oxidized 2[4Fe-4S]-[ferredoxin] + 2 ADP + 2 phosphate = protochlorophyllide a + reduced 2[4Fe-4S]-[ferredoxin] + 2 ATP + 2 H2O. It participates in porphyrin-containing compound metabolism; bacteriochlorophyll biosynthesis (light-independent). Its function is as follows. Component of the dark-operative protochlorophyllide reductase (DPOR) that uses Mg-ATP and reduced ferredoxin to reduce ring D of protochlorophyllide (Pchlide) to form chlorophyllide a (Chlide). This reaction is light-independent. The L component serves as a unique electron donor to the NB-component of the complex, and binds Mg-ATP. The sequence is that of Light-independent protochlorophyllide reductase iron-sulfur ATP-binding protein from Cereibacter sphaeroides (strain KD131 / KCTC 12085) (Rhodobacter sphaeroides).